A 91-amino-acid chain; its full sequence is Protein translocase subunit SecG (91 aa).

2 helical membrane-spanning segments follow: residues 16 to 36 (HTFL…VVLL) and 71 to 91 (LTII…YLGM).

This sequence belongs to the SecG family. As to quaternary structure, component of the Sec protein translocase complex. Heterotrimer consisting of SecY, SecE and SecG subunits. The heterotrimers can form oligomers, although 1 heterotrimer is thought to be able to translocate proteins. Interacts with SecDF, and other proteins may be involved. The channel interacts with SecA via subunit SecY. Also part of the accessory SecA2/SecY2 protein translocation apparatus required to export cell wall protein GspB.

The protein resides in the cell membrane. In terms of biological role, subunit of the protein translocation channel SecYEG. While not essential, it considerably increases the export efficiency of extracellular proteins. This chain is Protein translocase subunit SecG, found in Staphylococcus aureus (strain NCTC 8325 / PS 47).